The chain runs to 168 residues: MKPTKMRNKMIYRASYQTKSKQLGSALSKDLQKKYGKRSVRVNEGDSVTILRGEFKGVDGKVAEVSTAKSSVAIEGVKKEKTKGDKFDVFIHTSNLLVTSLNTEDKWRIAKLEGKDPRKQPKEAPKAAEKPAKEEPKKETPKAEEKPAKEEPKETKVEKKSEEKEDEN.

The segment at 112 to 168 (LEGKDPRKQPKEAPKAAEKPAKEEPKKETPKAEEKPAKEEPKETKVEKKSEEKEDEN) is disordered.

This sequence belongs to the universal ribosomal protein uL24 family. As to quaternary structure, part of the 50S ribosomal subunit.

Functionally, one of two assembly initiator proteins, it binds directly to the 5'-end of the 23S rRNA, where it nucleates assembly of the 50S subunit. Its function is as follows. Located at the polypeptide exit tunnel on the outside of the subunit. This chain is Large ribosomal subunit protein uL24, found in Nitrosopumilus maritimus (strain SCM1).